The primary structure comprises 165 residues: GTPase activating protein 1 (165 aa).

Positions 1–105 constitute a C2 domain; it reads MLGHLVGLVK…VVKMKIEGVA (105 aa). Positions 22, 23, 28, 74, 75, 76, and 81 each coordinate Ca(2+).

It belongs to the plant CAR protein family. Binds to PYR/PYL/RCAR abscisic acid intracellular receptors in an ABA-independent manner, both at the plasma membrane and in the nucleus. Binds phospholipids in a Ca(2+)-dependent manner. Interacts with YchF1.

It is found in the cell membrane. The protein resides in the nucleus. It localises to the cytoplasm. Its subcellular location is the cytosol. Mediates the transient calcium-dependent interaction of PYR/PYL/RCAR abscisic acid (ABA) receptors with the plasma membrane and thus regulates ABA sensitivity. Stimulates the GTPase/ATPase activities of YchF1, and regulates its subcellular localization. Promotes tolerance towards salinity stress by limiting the accumulation of reactive oxygen species (ROS). Promotes resistance to bacterial pathogens. The polypeptide is GTPase activating protein 1 (Oryza sativa subsp. indica (Rice)).